Here is a 187-residue protein sequence, read N- to C-terminus: Interferon alpha-3 (187 aa).

The N-terminal stretch at 1–23 (MALPCSFSVALVLLSCHSLCCLA) is a signal peptide. 2 disulfides stabilise this stretch: C24-C122 and C52-C160. N-linked (GlcNAc...) asparagine glycosylation is found at N94 and N101.

It belongs to the alpha/beta interferon family.

The protein localises to the secreted. Functionally, produced by macrophages, IFN-alpha have antiviral activities. Interferon stimulates the production of two enzymes: a protein kinase and an oligoadenylate synthetase. This Canis lupus familiaris (Dog) protein is Interferon alpha-3.